Consider the following 215-residue polypeptide: Deoxyadenosine kinase (215 aa).

Residue Gly-9–Ser-17 coordinates ATP. Residues Glu-33, Tyr-45, and Asn-56 each contribute to the substrate site. Asp-79 serves as the catalytic Proton acceptor. Positions 80, 85, and 150 each coordinate substrate.

The protein belongs to the DCK/DGK family. Heterodimer of a deoxyadenosine (DAK) and a deoxyguanosine kinase (DGK).

The catalysed reaction is 2'-deoxyadenosine + ATP = dAMP + ADP + H(+). Its function is as follows. DGK/DAK plays an essential role in generating the deoxyribonucleotide precursors, dGTP and dATP, for DNA metabolism. In Lactobacillus acidophilus (strain ATCC 700396 / NCK56 / N2 / NCFM), this protein is Deoxyadenosine kinase.